The following is a 37-amino-acid chain: Potassium channel toxin alpha-KTx 3.9 (37 aa).

3 disulfide bridges follow: Cys7–Cys27, Cys13–Cys32, and Cys17–Cys34. Residues 25–32 form an interaction with Ca(2+)-activated K(+) channels region; the sequence is GKCMNRKC.

It belongs to the short scorpion toxin superfamily. Potassium channel inhibitor family. Alpha-KTx 03 subfamily. In terms of tissue distribution, expressed by the venom gland.

Its subcellular location is the secreted. In terms of biological role, binds and inhibits potassium channels. Intracerebroventricular injection into mice induces paralyzing symptoms followed by death. Its binding affinity to rat brain synaptosomes is 5-fold lower than this of KTX 1. The polypeptide is Potassium channel toxin alpha-KTx 3.9 (KTX3) (Buthus occitanus tunetanus (Common European scorpion)).